We begin with the raw amino-acid sequence, 995 residues long: Translation initiation factor IF-2 (995 aa).

A disordered region spans residues 53–399 (NNAGSPAPAA…SGAPRGQGQV (347 aa)). Pro residues-rich tracts occupy residues 60–87 (PAAP…PPGG) and 104–119 (TPGP…PPQS). The segment covering 135–160 (AAAEARAAALKAEQEAAVKAAQAARQ) has biased composition (low complexity). The span at 161–171 (QQRENVRREPP) shows a compositional bias: basic and acidic residues. Residues 177-192 (RPGPRPGPGTMPPRPG) show a composition bias toward pro residues. The segment covering 193–202 (SPAAGRSGAP) has biased composition (low complexity). Composition is skewed to pro residues over residues 203–213 (APGPGPRPGGR) and 242–264 (RPSP…PSPA). Residues 273-363 (RPGGPGSGRP…GAAGAFGRPG (91 aa)) show a composition bias toward gly residues. Residues 367 to 376 (TRGRKSKKQR) are compositionally biased toward basic residues. The tr-type G domain maps to 486–658 (SRPPVVTVMG…VLLTADASLE (173 aa)). The segment at 495–502 (GHVDHGKT) is G1. 495 to 502 (GHVDHGKT) serves as a coordination point for GTP. The G2 stretch occupies residues 520–524 (GITQH). Residues 545–548 (DTPG) form a G3 region. Residues 545 to 549 (DTPGH) and 599 to 602 (NKID) contribute to the GTP site. The interval 599 to 602 (NKID) is G4. Positions 635-637 (AAK) are G5.

This sequence belongs to the TRAFAC class translation factor GTPase superfamily. Classic translation factor GTPase family. IF-2 subfamily.

Its subcellular location is the cytoplasm. In terms of biological role, one of the essential components for the initiation of protein synthesis. Protects formylmethionyl-tRNA from spontaneous hydrolysis and promotes its binding to the 30S ribosomal subunits. Also involved in the hydrolysis of GTP during the formation of the 70S ribosomal complex. The polypeptide is Translation initiation factor IF-2 (Salinispora arenicola (strain CNS-205)).